An 877-amino-acid polypeptide reads, in one-letter code: DNA repair protein rad16 (877 aa).

Ser71 is subject to Phosphoserine; by CK2. The interval 440–490 is disordered; that stretch reads SKSIKKPEPSKEREASNTTSRKGVPPSKRRRVRGGNNATSRTTSDNTDAND. A compositionally biased stretch (basic and acidic residues) spans 444-454; it reads KKPEPSKEREA. Polar residues predominate over residues 475–490; sequence NNATSRTTSDNTDAND. The region spanning 652–732 is the ERCC4 domain; it reads RVIVDLREFR…IPVLLIEFEQ (81 aa).

Belongs to the XPF family. As to quaternary structure, heterodimer composed of rad16 and swi10.

The protein resides in the nucleus. It localises to the cytoplasm. Its subcellular location is the cytoskeleton. The protein localises to the microtubule organizing center. It is found in the spindle pole body. Endonuclease that specifically degrades single-stranded DNA and which is involved in nucleotide excision repair of DNA damaged with UV light, bulky adducts, or cross-linking agents. Required for double strand break-induced interchromosomal gene conversion. This is DNA repair protein rad16 (rad16) from Schizosaccharomyces pombe (strain 972 / ATCC 24843) (Fission yeast).